The following is a 274-amino-acid chain: Penicillin-insensitive murein endopeptidase (274 aa).

Residues 1–19 (MNKTAIALLALLASSVSLA) form the signal peptide. 3 disulfides stabilise this stretch: C44/C265, C187/C235, and C216/C223. Zn(2+) contacts are provided by H110, H113, D120, D147, H150, and H211. Positions 227-274 (PLPPPGDGCGAELQSWFEPPKPGTTKPEKKTPPPLPPSCQALLDEHVI) are disordered.

This sequence belongs to the peptidase M74 family. As to quaternary structure, dimer. Requires Zn(2+) as cofactor.

It is found in the periplasm. In terms of biological role, murein endopeptidase that cleaves the D-alanyl-meso-2,6-diamino-pimelyl amide bond that connects peptidoglycan strands. Likely plays a role in the removal of murein from the sacculus. The polypeptide is Penicillin-insensitive murein endopeptidase (Escherichia coli O157:H7).